Consider the following 699-residue polypeptide: Elongation factor G (699 aa).

One can recognise a tr-type G domain in the interval 8–288 (EDYRNFGIMA…AVCEYLPSPL (281 aa)). GTP is bound by residues 17–24 (AHIDAGKT), 86–90 (DTPGH), and 140–143 (NKMD).

Belongs to the TRAFAC class translation factor GTPase superfamily. Classic translation factor GTPase family. EF-G/EF-2 subfamily.

It is found in the cytoplasm. In terms of biological role, catalyzes the GTP-dependent ribosomal translocation step during translation elongation. During this step, the ribosome changes from the pre-translocational (PRE) to the post-translocational (POST) state as the newly formed A-site-bound peptidyl-tRNA and P-site-bound deacylated tRNA move to the P and E sites, respectively. Catalyzes the coordinated movement of the two tRNA molecules, the mRNA and conformational changes in the ribosome. This chain is Elongation factor G, found in Allorhizobium ampelinum (strain ATCC BAA-846 / DSM 112012 / S4) (Agrobacterium vitis (strain S4)).